The following is a 460-amino-acid chain: Argininosuccinate lyase (460 aa).

It belongs to the lyase 1 family. Argininosuccinate lyase subfamily.

The protein resides in the cytoplasm. It carries out the reaction 2-(N(omega)-L-arginino)succinate = fumarate + L-arginine. The protein operates within amino-acid biosynthesis; L-arginine biosynthesis; L-arginine from L-ornithine and carbamoyl phosphate: step 3/3. This chain is Argininosuccinate lyase, found in Campylobacter hominis (strain ATCC BAA-381 / DSM 21671 / CCUG 45161 / LMG 19568 / NCTC 13146 / CH001A).